Reading from the N-terminus, the 237-residue chain is Ribosomal RNA small subunit methyltransferase G (237 aa).

Residues G78, F83, 129-130 (AE), and R148 contribute to the S-adenosyl-L-methionine site.

This sequence belongs to the methyltransferase superfamily. RNA methyltransferase RsmG family.

It is found in the cytoplasm. Functionally, specifically methylates the N7 position of a guanine in 16S rRNA. The protein is Ribosomal RNA small subunit methyltransferase G of Clostridium kluyveri (strain ATCC 8527 / DSM 555 / NBRC 12016 / NCIMB 10680 / K1).